The following is a 488-amino-acid chain: Proline--tRNA ligase (488 aa).

This sequence belongs to the class-II aminoacyl-tRNA synthetase family. ProS type 3 subfamily. In terms of assembly, homodimer.

The protein resides in the cytoplasm. The enzyme catalyses tRNA(Pro) + L-proline + ATP = L-prolyl-tRNA(Pro) + AMP + diphosphate. Functionally, catalyzes the attachment of proline to tRNA(Pro) in a two-step reaction: proline is first activated by ATP to form Pro-AMP and then transferred to the acceptor end of tRNA(Pro). This Pyrobaculum islandicum (strain DSM 4184 / JCM 9189 / GEO3) protein is Proline--tRNA ligase.